Reading from the N-terminus, the 181-residue chain is Oligoribonuclease (181 aa).

Residues 8 to 171 (LIWIDMEMTG…ADIYDSIEEL (164 aa)) form the Exonuclease domain. Residue Tyr129 is part of the active site.

Belongs to the oligoribonuclease family.

Its subcellular location is the cytoplasm. 3'-to-5' exoribonuclease specific for small oligoribonucleotides. This is Oligoribonuclease from Nitrosomonas europaea (strain ATCC 19718 / CIP 103999 / KCTC 2705 / NBRC 14298).